Reading from the N-terminus, the 292-residue chain is MAMRQCAIYGKGGIGKSTTTQNLVAALAEAGKKVMIVGCDPKADSTRLILHAKAQNTIMEMAAEAGTVEDLELEDVLKVGYGDVKCVESGGPEPGVGCAGRGVITAINFLEEEGAYEDDLDFVFYDVLGDVVCGGFAMPIRENKAQEIYIVVSGEMMAMYAANNISKGIVKYANSGGVRLAGLICNSRNTDREDELIIALAERLGTQMIHFIPRDNVVQRAEIRRMTCIEYDPAAKQSDEYRELAQKIISNEKLVIPTPVTMDELEELLMDFGILEEEDESVIGKTAAELEA.

10 to 17 provides a ligand contact to ATP; the sequence is GKGGIGKS. A [4Fe-4S] cluster-binding site is contributed by Cys-98. The residue at position 101 (Arg-101) is an ADP-ribosylarginine; by dinitrogenase reductase ADP-ribosyltransferase. A [4Fe-4S] cluster-binding site is contributed by Cys-133.

The protein belongs to the NifH/BchL/ChlL family. Homodimer. [4Fe-4S] cluster serves as cofactor. The reversible ADP-ribosylation of Arg-101 inactivates the nitrogenase reductase and regulates nitrogenase activity.

The catalysed reaction is N2 + 8 reduced [2Fe-2S]-[ferredoxin] + 16 ATP + 16 H2O = H2 + 8 oxidized [2Fe-2S]-[ferredoxin] + 2 NH4(+) + 16 ADP + 16 phosphate + 6 H(+). In terms of biological role, the key enzymatic reactions in nitrogen fixation are catalyzed by the nitrogenase complex, which has 2 components: the iron protein and the molybdenum-iron protein. The polypeptide is Nitrogenase iron protein (Teredinibacter turnerae (strain ATCC 39867 / T7901)).